The primary structure comprises 134 residues: MSYTRTIHSSASILKMNSALQISCLLVVLGCLLGSGHCQSEAEFTAKSREIAQMFGNPSVDKYTKARNLPALLAFYEKYSSRLRLTPQERNSINNAIRQYKAQRNQQVDGVSAQGGWLFDIIKTAISIIVKAVE.

Positions Met1–Cys38 are cleaved as a signal peptide.

The protein belongs to the Turandot family.

Its subcellular location is the secreted. Its function is as follows. A humoral factor that may play a role in stress tolerance. In Drosophila sechellia (Fruit fly), this protein is Protein Turandot E.